The primary structure comprises 122 residues: Large ribosomal subunit protein uL14 (122 aa).

It belongs to the universal ribosomal protein uL14 family. In terms of assembly, part of the 50S ribosomal subunit. Forms a cluster with proteins L3 and L19. In the 70S ribosome, L14 and L19 interact and together make contacts with the 16S rRNA in bridges B5 and B8.

Binds to 23S rRNA. Forms part of two intersubunit bridges in the 70S ribosome. This Chlamydia pneumoniae (Chlamydophila pneumoniae) protein is Large ribosomal subunit protein uL14.